We begin with the raw amino-acid sequence, 111 residues long: Ig kappa chain V-III region PC 7175 (111 aa).

Residues 1–23 form a framework-1 region; that stretch reads DIVLTQSPASLAVSLGQRATISC. Cys-23 and Cys-92 are joined by a disulfide. The tract at residues 24 to 38 is complementarity-determining-1; sequence RASKSVSTSGYSYMH. The interval 39 to 53 is framework-2; it reads WYQQKPGQPPKLLIY. Positions 54 to 60 are complementarity-determining-2; the sequence is LASNLES. Positions 61 to 92 are framework-3; that stretch reads GVPARFSGSGSGTDFTLNIHPVEEEDAATYYC. Residues 93 to 101 form a complementarity-determining-3 region; it reads QHSRELPLT. The segment at 102–111 is framework-4; sequence FGAGTKLELK.

This is Ig kappa chain V-III region PC 7175 from Mus musculus (Mouse).